The following is a 445-amino-acid chain: Allantoinase (445 aa).

6 residues coordinate Zn(2+): H63, H65, K150, H186, H238, and D311. K150 carries the post-translational modification N6-carboxylysine.

Belongs to the metallo-dependent hydrolases superfamily. Allantoinase family. In terms of assembly, homotetramer. Zn(2+) serves as cofactor. Carboxylation allows a single lysine to coordinate two zinc ions.

It catalyses the reaction (S)-allantoin + H2O = allantoate + H(+). The protein operates within nitrogen metabolism; (S)-allantoin degradation; allantoate from (S)-allantoin: step 1/1. Catalyzes the conversion of allantoin (5-ureidohydantoin) to allantoic acid by hydrolytic cleavage of the five-member hydantoin ring. In Streptomyces avermitilis (strain ATCC 31267 / DSM 46492 / JCM 5070 / NBRC 14893 / NCIMB 12804 / NRRL 8165 / MA-4680), this protein is Allantoinase.